We begin with the raw amino-acid sequence, 147 residues long: Hemoglobin subunit beta-2 (147 aa).

N-acetylvaline is present on V2. One can recognise a Globin domain in the interval 3–147 (HLTDAEKSAV…VATALAHKYH (145 aa)). K18 is subject to N6-succinyllysine. Y42 is subject to Phosphotyrosine. A phosphoserine mark is found at S45, S51, and S53. K60 bears the N6-succinyllysine mark. Heme b is bound by residues H64 and H93. An Asymmetric dimethylarginine modification is found at R105. Position 124 is a phosphothreonine (T124).

It belongs to the globin family. In terms of assembly, heterotetramer of two alpha chains and two beta chains. In terms of tissue distribution, red blood cells.

Its function is as follows. Involved in oxygen transport from the lung to the various peripheral tissues. The chain is Hemoglobin subunit beta-2 (Hbb-b2) from Mus musculus (Mouse).